A 347-amino-acid chain; its full sequence is Phenylalanine--tRNA ligase alpha subunit (347 aa).

Position 262 (glutamate 262) interacts with Mg(2+).

The protein belongs to the class-II aminoacyl-tRNA synthetase family. Phe-tRNA synthetase alpha subunit type 1 subfamily. In terms of assembly, tetramer of two alpha and two beta subunits. It depends on Mg(2+) as a cofactor.

The protein localises to the cytoplasm. The enzyme catalyses tRNA(Phe) + L-phenylalanine + ATP = L-phenylalanyl-tRNA(Phe) + AMP + diphosphate + H(+). This Roseiflexus castenholzii (strain DSM 13941 / HLO8) protein is Phenylalanine--tRNA ligase alpha subunit.